We begin with the raw amino-acid sequence, 355 residues long: Peptide chain release factor 1 (355 aa).

Gln-233 is subject to N5-methylglutamine. The segment at 280–310 is disordered; it reads ERRKKEQKRANNRRGQVGSGDRSERIRTYNF.

This sequence belongs to the prokaryotic/mitochondrial release factor family. In terms of processing, methylated by PrmC. Methylation increases the termination efficiency of RF1.

The protein resides in the cytoplasm. Functionally, peptide chain release factor 1 directs the termination of translation in response to the peptide chain termination codons UAG and UAA. The protein is Peptide chain release factor 1 of Rickettsia canadensis (strain McKiel).